The chain runs to 344 residues: DNA-directed RNA polymerase subunit alpha (344 aa).

The segment at 1-246 (MLVEKFLKDF…EFLFPLVDFE (246 aa)) is alpha N-terminal domain (alpha-NTD). The segment at 259–344 (ESSNLLDMSI…VLSKNVKISE (86 aa)) is alpha C-terminal domain (alpha-CTD).

Belongs to the RNA polymerase alpha chain family. As to quaternary structure, homodimer. The RNAP catalytic core consists of 2 alpha, 1 beta, 1 beta' and 1 omega subunit. When a sigma factor is associated with the core the holoenzyme is formed, which can initiate transcription.

The enzyme catalyses RNA(n) + a ribonucleoside 5'-triphosphate = RNA(n+1) + diphosphate. Functionally, DNA-dependent RNA polymerase catalyzes the transcription of DNA into RNA using the four ribonucleoside triphosphates as substrates. In Borreliella burgdorferi (strain ATCC 35210 / DSM 4680 / CIP 102532 / B31) (Borrelia burgdorferi), this protein is DNA-directed RNA polymerase subunit alpha.